The following is a 100-amino-acid chain: MSANQEEDKKPGDGGAHINLKVKGQDGNEVFFRIKRSTQLKKLMNAYCDRQSVDMNSIAFLFDGRRLRAEQTPDELDMEDGDEIDAMLHQTGGSGGGATA.

Residues 1–12 (MSANQEEDKKPG) are compositionally biased toward basic and acidic residues. A disordered region spans residues 1–21 (MSANQEEDKKPGDGGAHINLK). The 78-residue stretch at 16–93 (AHINLKVKGQ…IDAMLHQTGG (78 aa)) folds into the Ubiquitin-like domain. Residue Gly93 forms a Glycyl lysine isopeptide (Gly-Lys) (interchain with K-? in acceptor proteins) linkage.

The protein belongs to the ubiquitin family. SUMO subfamily. In terms of assembly, interacts with SAE2, SCE1, SIZ1 and MMS21. Interacts with HSFA2. Covalently attached to ABI5, FLD, GTE3, HSFA2 and ICE1.

The protein localises to the nucleus. The protein resides in the cytoplasm. Functionally, ubiquitin-like protein which can be covalently attached to target lysines as a monomer. Does not seem to be involved in protein degradation and may function as an antagonist of ubiquitin in the degradation process. Required for the massive protein sumoylation in the nucleus induced by heat shock and controlled by SIZ1. Involved in the regulation of the heat stress transcription factor HSFA2 in acquired thermotolerance. This Arabidopsis thaliana (Mouse-ear cress) protein is Small ubiquitin-related modifier 1.